Reading from the N-terminus, the 1234-residue chain is 1-phosphatidylinositol 4,5-bisphosphate phosphodiesterase beta-3 (1234 aa).

Alanine 2 carries the post-translational modification N-acetylalanine. The PI-PLC X-box domain maps to 315-466 (MDMTQPLSAY…LMGRILVKNK (152 aa)). Residues histidine 330 and histidine 377 contribute to the active site. Residues 465-586 (NKKRHRPSTG…GTASSEVNAT (122 aa)) are disordered. A phosphoserine mark is found at serine 472, serine 488, serine 493, and serine 535. Positions 486–513 (EQSNSALSESSAATEPSSPQLGSPSSDS) are enriched in low complexity. Positions 554-566 (REDEEEDEEEEET) are enriched in acidic residues. A compositionally biased stretch (polar residues) spans 577-586 (GTASSEVNAT). Residues 589 to 705 (MSTLVNYVEP…GYLLKPEFMR (117 aa)) enclose the PI-PLC Y-box domain. A C2 domain is found at 706–834 (RPDKSFDPFT…RNEANQPLCL (129 aa)). Residues 886-907 (ASTEMCQETPSQQQGSQLSSNP) are compositionally biased toward polar residues. The tract at residues 886–936 (ASTEMCQETPSQQQGSQLSSNPVPNPLDDSPRWPPGPTTSPTSTSLSSPGQ) is disordered. Over residues 924-934 (TSPTSTSLSSP) the composition is skewed to low complexity. 2 positions are modified to phosphoserine: serine 925 and serine 1105. The interval 1196–1234 (SEGLGDGPLVACASNGHAAGSGGHQSGADSESQEENTQL) is disordered. The tract at residues 1231-1234 (NTQL) is interaction with SHANK2.

In terms of assembly, interacts with LPAR2. Interacts with SHANK2. Ca(2+) serves as cofactor. In terms of tissue distribution, expressed in parotid gland, brain, liver, uterus, lung, heart, adrenal gland, and ovary. Not detected in spleen, pancreas, intestine, thymus or kidney.

It is found in the cytoplasm. The protein resides in the membrane. It localises to the nucleus. The enzyme catalyses a 1,2-diacyl-sn-glycero-3-phospho-(1D-myo-inositol-4,5-bisphosphate) + H2O = 1D-myo-inositol 1,4,5-trisphosphate + a 1,2-diacyl-sn-glycerol + H(+). It catalyses the reaction a 1,2-diacyl-sn-glycero-3-phospho-(1D-myo-inositol) + H2O = 1D-myo-inositol 1-phosphate + a 1,2-diacyl-sn-glycerol + H(+). With respect to regulation, activated by G(q)/G(11) G alpha proteins in response to ligand-binding to G protein-coupled receptors. Functionally, catalyzes the production of the second messenger molecules diacylglycerol (DAG) and inositol 1,4,5-trisphosphate (IP3). Key transducer of G protein-coupled receptor signaling: activated by G(q)/G(11) G alpha proteins downstream of G protein-coupled receptors activation. In neutrophils, participates in a phospholipase C-activating N-formyl peptide-activated GPCR (G protein-coupled receptor) signaling pathway by promoting RASGRP4 activation by DAG, to promote neutrophil functional responses. The sequence is that of 1-phosphatidylinositol 4,5-bisphosphate phosphodiesterase beta-3 from Rattus norvegicus (Rat).